The following is a 150-amino-acid chain: uncharacterized protein (150 aa).

This is an uncharacterized protein from Escherichia coli O157:H7.